A 153-amino-acid polypeptide reads, in one-letter code: Ribonuclease H (153 aa).

Residues 1 to 141 (MKHVHIFTDG…ADELARKGME (141 aa)) form the RNase H type-1 domain. Aspartate 9, glutamate 47, aspartate 69, and aspartate 133 together coordinate Mg(2+). The interval 123-153 (HAGHPENERADELARKGMEPFKKARRADAVK) is disordered. Residues 125–153 (GHPENERADELARKGMEPFKKARRADAVK) are compositionally biased toward basic and acidic residues.

It belongs to the RNase H family. As to quaternary structure, monomer. The cofactor is Mg(2+).

The protein resides in the cytoplasm. The enzyme catalyses Endonucleolytic cleavage to 5'-phosphomonoester.. Its function is as follows. Endonuclease that specifically degrades the RNA of RNA-DNA hybrids. The chain is Ribonuclease H from Rhizobium meliloti (strain 1021) (Ensifer meliloti).